The sequence spans 84 residues: MKRMILFTSCLLLIDIVVGGKEGYPADSKGCKVTCFLTAAGYCNTECKLQKASSGYCAWPACYCYGLPDSASVWDSATNKCGKK.

Positions 1-19 (MKRMILFTSCLLLIDIVVG) are cleaved as a signal peptide. One can recognise an LCN-type CS-alpha/beta domain in the interval 21 to 82 (KEGYPADSKG…VWDSATNKCG (62 aa)). 4 disulfides stabilise this stretch: cysteine 31–cysteine 81, cysteine 35–cysteine 57, cysteine 43–cysteine 62, and cysteine 47–cysteine 64. Cysteine 81 carries the post-translational modification Cysteine amide. A propeptide spanning residues 82–84 (GKK) is cleaved from the precursor.

Expressed by the venom gland.

It localises to the secreted. Its function is as follows. This protein is not toxic. It induces an immune response similar to that induced by whole venom. Thus, polyclonal antibodies raised against this protein can neutralize the effects of the venom. The protein is Toxin-like TcoNTxP1 of Tityus costatus (Brazilian scorpion).